The sequence spans 400 residues: Phosphoglycerate kinase (400 aa).

Substrate is bound by residues 23–25 (DLN), Arg-38, 61–64 (HFGR), Arg-120, and Arg-153. ATP contacts are provided by residues Lys-203, Glu-325, and 355-358 (GGDT).

Belongs to the phosphoglycerate kinase family. In terms of assembly, monomer.

It is found in the cytoplasm. It carries out the reaction (2R)-3-phosphoglycerate + ATP = (2R)-3-phospho-glyceroyl phosphate + ADP. Its pathway is carbohydrate degradation; glycolysis; pyruvate from D-glyceraldehyde 3-phosphate: step 2/5. This is Phosphoglycerate kinase from Methylobacterium radiotolerans (strain ATCC 27329 / DSM 1819 / JCM 2831 / NBRC 15690 / NCIMB 10815 / 0-1).